Reading from the N-terminus, the 131-residue chain is MKIALIAHDKKKEDMVSFAYAYKPIFEQHELFATGTTGLRIMEATGLVVTRYQSGPLGGDQEIGAMIAKNDLDMVIFFRDPLTAQPHEPDVNALLRLCDVYAIPLATNMASAEMLMHALERGDLDYRKLRK.

In terms of domain architecture, MGS-like spans 1-131; the sequence is MKIALIAHDK…GDLDYRKLRK (131 aa). Substrate is bound by residues His8, Lys12, 34-37, and 54-55; these read TGTT and SG. The Proton donor/acceptor role is filled by Asp60. His87 contacts substrate.

The protein belongs to the methylglyoxal synthase family.

It catalyses the reaction dihydroxyacetone phosphate = methylglyoxal + phosphate. Functionally, catalyzes the formation of methylglyoxal from dihydroxyacetone phosphate. This chain is Methylglyoxal synthase, found in Bacillus anthracis (strain A0248).